The sequence spans 639 residues: Far upstream element-binding protein 1 (639 aa).

Disordered stretches follow at residues 1–27 (MADY…NDAF) and 40–88 (KIGG…LPPM). At alanine 2 the chain carries N-acetylalanine. A compositionally biased stretch (gly residues) spans 14–23 (SAGGGGGGGV). A phosphoserine mark is found at serine 48 and serine 51. The span at 61-73 (RPLEDGDQPDAKK) shows a compositional bias: basic and acidic residues. 3 consecutive KH domains span residues 95–159 (VMTE…KRLL), 180–246 (NAVQ…KEMV), and 270–334 (NEGI…AEII). Serine 135 is subject to Phosphoserine. A Phosphothreonine modification is found at threonine 148. Omega-N-methylarginine occurs at positions 316, 354, 356, and 358. Residues 341 to 360 (VQAGNPGGPGPGGRGRGRGQ) form a disordered region. The span at 345-360 (NPGGPGPGGRGRGRGQ) shows a compositional bias: gly residues. The KH 4 domain maps to 371-438 (LQEFNFIVPT…QQIDYARQLI (68 aa)). Threonine 427 is modified (phosphothreonine). 2 disordered regions span residues 442–527 (IGGP…GTDP) and 543–574 (QAQP…PAGQ). Positions 463–500 (PHGPPGPPGPGTPMGPYNPAPYNPGPPGPAPHGPPAPY) are enriched in pro residues. Residues 551–568 (PAGAPTTTQTNGQGDQQN) are compositionally biased toward low complexity. Serine 625 carries the post-translational modification Phosphoserine.

Found in a complex with PUF60 and far upstream element (FUSE) DNA segment. Interacts with PUF60 and JTV1. In terms of processing, ubiquitinated. This targets the protein for proteasome-mediated degradation.

The protein localises to the nucleus. Its function is as follows. Regulates MYC expression by binding to a single-stranded far-upstream element (FUSE) upstream of the MYC promoter. May act both as activator and repressor of transcription. The protein is Far upstream element-binding protein 1 of Rattus norvegicus (Rat).